The chain runs to 212 residues: Phosphatidylserine decarboxylase proenzyme (212 aa).

S182 functions as the Schiff-base intermediate with substrate; via pyruvic acid in the catalytic mechanism. S182 is subject to Pyruvic acid (Ser); by autocatalysis.

This sequence belongs to the phosphatidylserine decarboxylase family. PSD-A subfamily. As to quaternary structure, heterodimer of a large membrane-associated beta subunit and a small pyruvoyl-containing alpha subunit. Pyruvate serves as cofactor. Post-translationally, is synthesized initially as an inactive proenzyme. Formation of the active enzyme involves a self-maturation process in which the active site pyruvoyl group is generated from an internal serine residue via an autocatalytic post-translational modification. Two non-identical subunits are generated from the proenzyme in this reaction, and the pyruvate is formed at the N-terminus of the alpha chain, which is derived from the carboxyl end of the proenzyme. The post-translation cleavage follows an unusual pathway, termed non-hydrolytic serinolysis, in which the side chain hydroxyl group of the serine supplies its oxygen atom to form the C-terminus of the beta chain, while the remainder of the serine residue undergoes an oxidative deamination to produce ammonia and the pyruvoyl prosthetic group on the alpha chain.

The protein resides in the cell membrane. The catalysed reaction is a 1,2-diacyl-sn-glycero-3-phospho-L-serine + H(+) = a 1,2-diacyl-sn-glycero-3-phosphoethanolamine + CO2. It functions in the pathway phospholipid metabolism; phosphatidylethanolamine biosynthesis; phosphatidylethanolamine from CDP-diacylglycerol: step 2/2. In terms of biological role, catalyzes the formation of phosphatidylethanolamine (PtdEtn) from phosphatidylserine (PtdSer). This Chlorobium phaeobacteroides (strain DSM 266 / SMG 266 / 2430) protein is Phosphatidylserine decarboxylase proenzyme.